The primary structure comprises 320 residues: HPr kinase/phosphorylase (320 aa).

Residues His139 and Lys160 contribute to the active site. An ATP-binding site is contributed by 154–161 (GDSGVGKS). Ser161 is a binding site for Mg(2+). Asp178 functions as the Proton acceptor; for phosphorylation activity. Proton donor; for dephosphorylation activity in the catalytic mechanism. The interval 202–211 (MEIRGIGIID) is important for the catalytic mechanism of both phosphorylation and dephosphorylation. Mg(2+) is bound at residue Glu203. Arg244 is a catalytic residue. The tract at residues 265 to 270 (PVKTGR) is important for the catalytic mechanism of dephosphorylation.

This sequence belongs to the HPrK/P family. Homohexamer. It depends on Mg(2+) as a cofactor.

It catalyses the reaction [HPr protein]-L-serine + ATP = [HPr protein]-O-phospho-L-serine + ADP + H(+). The catalysed reaction is [HPr protein]-O-phospho-L-serine + phosphate + H(+) = [HPr protein]-L-serine + diphosphate. Functionally, catalyzes the ATP- as well as the pyrophosphate-dependent phosphorylation of a specific serine residue in HPr, a phosphocarrier protein of the phosphoenolpyruvate-dependent sugar phosphotransferase system (PTS). HprK/P also catalyzes the pyrophosphate-producing, inorganic phosphate-dependent dephosphorylation (phosphorolysis) of seryl-phosphorylated HPr (P-Ser-HPr). The two antagonistic activities of HprK/P are regulated by several intracellular metabolites, which change their concentration in response to the absence or presence of rapidly metabolisable carbon sources (glucose, fructose, etc.) in the growth medium. Therefore, by controlling the phosphorylation state of HPr, HPrK/P is a sensor enzyme that plays a major role in the regulation of carbon metabolism and sugar transport: it mediates carbon catabolite repression (CCR), and regulates PTS-catalyzed carbohydrate uptake and inducer exclusion. This is HPr kinase/phosphorylase from Limosilactobacillus reuteri (strain DSM 20016) (Lactobacillus reuteri).